We begin with the raw amino-acid sequence, 431 residues long: Glutamate--tRNA ligase 1 (431 aa).

Positions 6–16 (PSPTGDMHIGN) match the 'HIGH' region motif. A 'KMSKS' region motif is present at residues 235–239 (KMSKR). Position 238 (Lys-238) interacts with ATP.

This sequence belongs to the class-I aminoacyl-tRNA synthetase family. Glutamate--tRNA ligase type 1 subfamily. As to quaternary structure, monomer.

It localises to the cytoplasm. The catalysed reaction is tRNA(Glu) + L-glutamate + ATP = L-glutamyl-tRNA(Glu) + AMP + diphosphate. In terms of biological role, catalyzes the attachment of glutamate to tRNA(Glu) in a two-step reaction: glutamate is first activated by ATP to form Glu-AMP and then transferred to the acceptor end of tRNA(Glu). The chain is Glutamate--tRNA ligase 1 from Campylobacter curvus (strain 525.92).